We begin with the raw amino-acid sequence, 226 residues long: Chalcone--flavanone isomerase 2-A (226 aa).

3 residues coordinate substrate: Thr49, Asn114, and Ser191.

It belongs to the chalcone isomerase family. As to expression, mostly expressed in flowers, and, to a lower extent, in roots, shoots, and seeds.

It catalyses the reaction a chalcone = a flavanone.. The protein operates within secondary metabolite biosynthesis; flavonoid biosynthesis. Its function is as follows. Catalyzes the intramolecular cyclization of bicyclic chalcones into tricyclic (S)-flavanones. Responsible for the isomerization of 4,2',4',6'-tetrahydroxychalcone (also termed chalcone) into naringenin. This chain is Chalcone--flavanone isomerase 2-A (CHI2-A), found in Glycine max (Soybean).